The primary structure comprises 103 residues: Large ribosomal subunit protein bL21 (103 aa).

It belongs to the bacterial ribosomal protein bL21 family. In terms of assembly, part of the 50S ribosomal subunit. Contacts protein L20.

Its function is as follows. This protein binds to 23S rRNA in the presence of protein L20. The sequence is that of Large ribosomal subunit protein bL21 from Salmonella schwarzengrund (strain CVM19633).